We begin with the raw amino-acid sequence, 117 residues long: Transcription elongation factor A protein-like 8 (117 aa).

The segment at 1-82 (MQKSCDENEG…EEVIRGVDEL (82 aa)) is disordered. Over residues 41–82 (NVREETEGSHRGEPAEPSPEPKEDTPARHLNPEEVIRGVDEL) the composition is skewed to basic and acidic residues. A coiled-coil region spans residues 73-100 (EEVIRGVDELERLREEIRRVRNKFVLMH).

The protein belongs to the TFS-II family. TFA subfamily.

The protein resides in the nucleus. In terms of biological role, may be involved in transcriptional regulation. This chain is Transcription elongation factor A protein-like 8 (Tceal8), found in Mus musculus (Mouse).